Consider the following 460-residue polypeptide: tRNA modification GTPase MnmE (460 aa).

(6S)-5-formyl-5,6,7,8-tetrahydrofolate-binding residues include Arg24, Glu81, and Lys121. The TrmE-type G domain occupies 218–385 (GMVVAIAGPP…LIAAIEDFAA (168 aa)). GTP-binding positions include 228–233 (NVGKST), 247–253 (SPHAGTT), and 272–275 (DTAG). Mg(2+) is bound by residues Ser232 and Thr253. Residue Lys460 participates in (6S)-5-formyl-5,6,7,8-tetrahydrofolate binding.

It belongs to the TRAFAC class TrmE-Era-EngA-EngB-Septin-like GTPase superfamily. TrmE GTPase family. As to quaternary structure, homodimer. Heterotetramer of two MnmE and two MnmG subunits. K(+) serves as cofactor.

It is found in the cytoplasm. In terms of biological role, exhibits a very high intrinsic GTPase hydrolysis rate. Involved in the addition of a carboxymethylaminomethyl (cmnm) group at the wobble position (U34) of certain tRNAs, forming tRNA-cmnm(5)s(2)U34. The polypeptide is tRNA modification GTPase MnmE (Rhodopseudomonas palustris (strain BisB5)).